The sequence spans 385 residues: 3-hydroxyisobutyryl-CoA hydrolase, mitochondrial (385 aa).

Residues Glu120, Gly145, Glu168, and Asp176 each coordinate substrate.

Belongs to the enoyl-CoA hydratase/isomerase family.

Its subcellular location is the mitochondrion. The catalysed reaction is 3-hydroxy-2-methylpropanoyl-CoA + H2O = 3-hydroxy-2-methylpropanoate + CoA + H(+). Its pathway is amino-acid degradation; L-valine degradation. Its function is as follows. Hydrolyzes 3-hydroxyisobutyryl-CoA (HIBYL-CoA), a saline catabolite. Has high activity toward isobutyryl-CoA. Could be an isobutyryl-CoA dehydrogenase that functions in valine catabolism. Also hydrolyzes 3-hydroxypropanoyl-CoA. The sequence is that of 3-hydroxyisobutyryl-CoA hydrolase, mitochondrial (hibch) from Xenopus tropicalis (Western clawed frog).